Consider the following 651-residue polypeptide: Protein SCARECROW 1 (651 aa).

Disordered stretches follow at residues 1-33 and 188-277; these read MGSS…ITSL and SDPA…KQRD. Positions 190-228 are enriched in pro residues; it reads PAPPPPPPPSHPALLPPDATAPPPPPTSVAALPPPPPPQ. A coiled-coil region spans residues 253-280; the sequence is TAEETAAAAAAAKERKEEQRRKQRDEEG. Over residues 254-263 the composition is skewed to low complexity; that stretch reads AEETAAAAAA. A compositionally biased stretch (basic and acidic residues) spans 264–277; the sequence is AKERKEEQRRKQRD. The GRAS domain occupies 274-644; it reads KQRDEEGLHL…LCLLTASAWR (371 aa). The leucine repeat I (LRI) stretch occupies residues 281 to 345; the sequence is LHLLTLLLQC…VSSCLGLYAP (65 aa). A LxCxE motif motif is present at residues 288-292; sequence LQCAE. Residues 364 to 429 form a VHIID region; sequence FQVFNGISPF…GGPPRVRLTG (66 aa). Residues 395 to 399 carry the VHIID motif; sequence VHIID. The segment at 439-471 is leucine repeat II (LRII); the sequence is ATGKRLSDFADTLGLPFEFCPVADKAGNLDPEK. The interval 480–567 is PFYRE; sequence VAVHWLRHSL…QQLLSREIRN (88 aa). The tract at residues 570–644 is SAW; the sequence is AVGGPARTGD…LCLLTASAWR (75 aa).

This sequence belongs to the GRAS family. In terms of assembly, interacts with SHR1, but not with SHR2. As to expression, expressed in the initial daughter cell before its asymmetric division and remains expressed in the endodermal cell layer after the division.

Its subcellular location is the nucleus. Transcription factor required for quiescent center cells specification and maintenance of surrounding stem cells, and for the asymmetric cell division involved in radial pattern formation in roots. Essential for cell division but not differentiation of the ground tissue. Regulates the radial organization of the shoot axial organs. Restricts SHR movment and sequesters it into the nucleus of the endodermis. The protein is Protein SCARECROW 1 (SCR1) of Oryza sativa subsp. japonica (Rice).